Reading from the N-terminus, the 487-residue chain is Cysteine--tRNA ligase (487 aa).

Cys-27 is a Zn(2+) binding site. Positions 29–39 (VTVYDLCHIGH) match the 'HIGH' region motif. Residues Cys-211, His-236, and Glu-240 each coordinate Zn(2+). The 'KMSKS' region signature appears at 268–272 (KMSKS). Lys-271 contributes to the ATP binding site.

It belongs to the class-I aminoacyl-tRNA synthetase family. In terms of assembly, monomer. It depends on Zn(2+) as a cofactor.

It localises to the cytoplasm. The enzyme catalyses tRNA(Cys) + L-cysteine + ATP = L-cysteinyl-tRNA(Cys) + AMP + diphosphate. This Thermodesulfovibrio yellowstonii (strain ATCC 51303 / DSM 11347 / YP87) protein is Cysteine--tRNA ligase.